A 65-amino-acid polypeptide reads, in one-letter code: Large ribosomal subunit protein uL29 (65 aa).

The protein belongs to the universal ribosomal protein uL29 family.

This is Large ribosomal subunit protein uL29 from Dehalococcoides mccartyi (strain ATCC BAA-2100 / JCM 16839 / KCTC 5957 / BAV1).